A 194-amino-acid polypeptide reads, in one-letter code: dITP/XTP pyrophosphatase (194 aa).

8 to 13 is a binding site for substrate; it reads TGNPGK. Mg(2+)-binding residues include Glu-38 and Asp-67. Asp-67 serves as the catalytic Proton acceptor. Residues Ser-68, 146–149, Lys-169, and 174–175 each bind substrate; these read FGYD and HR.

The protein belongs to the HAM1 NTPase family. In terms of assembly, homodimer. It depends on Mg(2+) as a cofactor.

It catalyses the reaction XTP + H2O = XMP + diphosphate + H(+). The catalysed reaction is dITP + H2O = dIMP + diphosphate + H(+). It carries out the reaction ITP + H2O = IMP + diphosphate + H(+). In terms of biological role, pyrophosphatase that catalyzes the hydrolysis of nucleoside triphosphates to their monophosphate derivatives, with a high preference for the non-canonical purine nucleotides XTP (xanthosine triphosphate), dITP (deoxyinosine triphosphate) and ITP. Seems to function as a house-cleaning enzyme that removes non-canonical purine nucleotides from the nucleotide pool, thus preventing their incorporation into DNA/RNA and avoiding chromosomal lesions. The chain is dITP/XTP pyrophosphatase from Synechocystis sp. (strain ATCC 27184 / PCC 6803 / Kazusa).